The sequence spans 265 residues: Type III pantothenate kinase (265 aa).

ATP is bound at residue Asp-9–Lys-16. Residues Tyr-96 and Gly-103–Arg-106 contribute to the substrate site. The Proton acceptor role is filled by Asp-105. Thr-129 is an ATP binding site. Thr-189 provides a ligand contact to substrate.

The protein belongs to the type III pantothenate kinase family. As to quaternary structure, homodimer. NH4(+) is required as a cofactor. The cofactor is K(+).

The protein localises to the cytoplasm. It catalyses the reaction (R)-pantothenate + ATP = (R)-4'-phosphopantothenate + ADP + H(+). It participates in cofactor biosynthesis; coenzyme A biosynthesis; CoA from (R)-pantothenate: step 1/5. Its function is as follows. Catalyzes the phosphorylation of pantothenate (Pan), the first step in CoA biosynthesis. In Burkholderia orbicola (strain AU 1054), this protein is Type III pantothenate kinase.